Consider the following 293-residue polypeptide: 4-hydroxy-tetrahydrodipicolinate synthase (293 aa).

Position 47 (T47) interacts with pyruvate. Residue Y136 is the Proton donor/acceptor of the active site. K164 serves as the catalytic Schiff-base intermediate with substrate. I206 serves as a coordination point for pyruvate.

It belongs to the DapA family. In terms of assembly, homotetramer; dimer of dimers.

The protein localises to the cytoplasm. It catalyses the reaction L-aspartate 4-semialdehyde + pyruvate = (2S,4S)-4-hydroxy-2,3,4,5-tetrahydrodipicolinate + H2O + H(+). Its pathway is amino-acid biosynthesis; L-lysine biosynthesis via DAP pathway; (S)-tetrahydrodipicolinate from L-aspartate: step 3/4. Catalyzes the condensation of (S)-aspartate-beta-semialdehyde [(S)-ASA] and pyruvate to 4-hydroxy-tetrahydrodipicolinate (HTPA). This Listeria innocua serovar 6a (strain ATCC BAA-680 / CLIP 11262) protein is 4-hydroxy-tetrahydrodipicolinate synthase.